The following is a 553-amino-acid chain: CTP synthase (553 aa).

An amidoligase domain region spans residues 1–266 (MTKNYIFITG…DNYICEYFKL (266 aa)). Residue Ser-14 coordinates CTP. Position 14 (Ser-14) interacts with UTP. Residues 15-20 (SLGKGI) and Asp-72 contribute to the ATP site. Residues Asp-72 and Glu-140 each contribute to the Mg(2+) site. CTP-binding positions include 147 to 149 (DIE), 187 to 192 (KTKPTQ), and Lys-223. UTP contacts are provided by residues 187–192 (KTKPTQ) and Lys-223. 239-241 (KDV) contacts ATP. The Glutamine amidotransferase type-1 domain maps to 291 to 544 (IIGIIGKYIK…IKSAKKNKKN (254 aa)). L-glutamine is bound at residue Gly-352. Cys-379 (nucleophile; for glutamine hydrolysis) is an active-site residue. Residues 380–383 (LGMQ), Glu-403, and Arg-472 contribute to the L-glutamine site. Active-site residues include His-517 and Glu-519.

It belongs to the CTP synthase family. In terms of assembly, homotetramer.

The enzyme catalyses UTP + L-glutamine + ATP + H2O = CTP + L-glutamate + ADP + phosphate + 2 H(+). It carries out the reaction L-glutamine + H2O = L-glutamate + NH4(+). The catalysed reaction is UTP + NH4(+) + ATP = CTP + ADP + phosphate + 2 H(+). It functions in the pathway pyrimidine metabolism; CTP biosynthesis via de novo pathway; CTP from UDP: step 2/2. With respect to regulation, allosterically activated by GTP, when glutamine is the substrate; GTP has no effect on the reaction when ammonia is the substrate. The allosteric effector GTP functions by stabilizing the protein conformation that binds the tetrahedral intermediate(s) formed during glutamine hydrolysis. Inhibited by the product CTP, via allosteric rather than competitive inhibition. Catalyzes the ATP-dependent amination of UTP to CTP with either L-glutamine or ammonia as the source of nitrogen. Regulates intracellular CTP levels through interactions with the four ribonucleotide triphosphates. The polypeptide is CTP synthase (Buchnera aphidicola subsp. Schizaphis graminum (strain Sg)).